Here is a 223-residue protein sequence, read N- to C-terminus: MIPMIVLATTNQNKVKEFQEILKDFAIEIRSLAEFGPIPEAIEDGKDFDENAYKKAIHTAKILGIPAIADDSGLEVHALNGAPGVYSARYSGEGATDASNCDKLLEELAGKEDRSANFTCVISIATPGGPALTYEGRCDGKILTEKRGKSGFGYDPLFYFAEYDKTFAELSMEEKNRVSHRGKALAEIKAEAPQIIKWLEQRLSEEKPAKPDHSEFEGNDWSK.

Threonine 9–lysine 14 contributes to the substrate binding site. Aspartate 71 functions as the Proton acceptor in the catalytic mechanism. Aspartate 71 contributes to the Mg(2+) binding site. Substrate-binding positions include serine 72, phenylalanine 152–aspartate 155, lysine 175, and histidine 180–arginine 181. A disordered region spans residues leucine 203–lysine 223.

It belongs to the HAM1 NTPase family. As to quaternary structure, homodimer. Mg(2+) serves as cofactor.

It catalyses the reaction XTP + H2O = XMP + diphosphate + H(+). The catalysed reaction is dITP + H2O = dIMP + diphosphate + H(+). It carries out the reaction ITP + H2O = IMP + diphosphate + H(+). Pyrophosphatase that catalyzes the hydrolysis of nucleoside triphosphates to their monophosphate derivatives, with a high preference for the non-canonical purine nucleotides XTP (xanthosine triphosphate), dITP (deoxyinosine triphosphate) and ITP. Seems to function as a house-cleaning enzyme that removes non-canonical purine nucleotides from the nucleotide pool, thus preventing their incorporation into DNA/RNA and avoiding chromosomal lesions. The sequence is that of dITP/XTP pyrophosphatase from Desulfotalea psychrophila (strain LSv54 / DSM 12343).